Here is a 396-residue protein sequence, read N- to C-terminus: Elongation factor Tu (396 aa).

The 195-residue stretch at Lys-11–Glu-205 folds into the tr-type G domain. A G1 region spans residues Gly-20–Thr-27. Gly-20–Thr-27 contributes to the GTP binding site. Thr-27 serves as a coordination point for Mg(2+). The interval Gly-61–Asn-65 is G2. Residues Asp-82–Gly-85 are G3. GTP contacts are provided by residues Asp-82 to His-86 and Asn-137 to Asp-140. Positions Asn-137–Asp-140 are G4. Positions Ser-175–Leu-177 are G5.

This sequence belongs to the TRAFAC class translation factor GTPase superfamily. Classic translation factor GTPase family. EF-Tu/EF-1A subfamily. Monomer.

Its subcellular location is the cytoplasm. It carries out the reaction GTP + H2O = GDP + phosphate + H(+). Functionally, GTP hydrolase that promotes the GTP-dependent binding of aminoacyl-tRNA to the A-site of ribosomes during protein biosynthesis. The sequence is that of Elongation factor Tu from Lactobacillus johnsonii (strain CNCM I-12250 / La1 / NCC 533).